Here is a 1030-residue protein sequence, read N- to C-terminus: Importin beta-like SAD2 homolog (1030 aa).

Residue methionine 1 is modified to N-acetylmethionine. Residues 25-99 form the Importin N-terminal domain; the sequence is AEQSLNQLQH…RNQILVFVSQ (75 aa). 2 disordered regions span residues 886–928 and 940–964; these read AAKA…GSTL and SYSDDDDFSDDDFSDDEELESPIDE. Composition is skewed to acidic residues over residues 890–924 and 943–964; these read EEEEEDEDGDDDDMDEFQTDDEDEDGDDENPDETD and DDDDFSDDDFSDDEELESPIDE.

The protein belongs to the importin beta family.

It is found in the cytoplasm. The protein localises to the nucleus. Its function is as follows. Functions probably in nuclear protein import, either by acting as autonomous nuclear transport receptor or as an adapter-like protein in association with other importin subunits. The protein is Importin beta-like SAD2 homolog of Arabidopsis thaliana (Mouse-ear cress).